Here is a 272-residue protein sequence, read N- to C-terminus: 3-methyl-2-oxobutanoate hydroxymethyltransferase (272 aa).

Mg(2+) is bound by residues Asp43 and Asp82. 3-methyl-2-oxobutanoate is bound by residues 43–44 (DS), Asp82, and Lys112. Glu114 lines the Mg(2+) pocket. Glu179 (proton acceptor) is an active-site residue.

The protein belongs to the PanB family. In terms of assembly, homodecamer; pentamer of dimers. It depends on Mg(2+) as a cofactor.

It is found in the cytoplasm. It catalyses the reaction 3-methyl-2-oxobutanoate + (6R)-5,10-methylene-5,6,7,8-tetrahydrofolate + H2O = 2-dehydropantoate + (6S)-5,6,7,8-tetrahydrofolate. It participates in cofactor biosynthesis; (R)-pantothenate biosynthesis; (R)-pantoate from 3-methyl-2-oxobutanoate: step 1/2. Functionally, catalyzes the reversible reaction in which hydroxymethyl group from 5,10-methylenetetrahydrofolate is transferred onto alpha-ketoisovalerate to form ketopantoate. This Staphylococcus aureus (strain JH1) protein is 3-methyl-2-oxobutanoate hydroxymethyltransferase.